Consider the following 454-residue polypeptide: Metacaspase-1A (454 aa).

Over residues 1–16 the composition is skewed to gly residues; the sequence is MSYGYPGQGYGPGGGH. The disordered stretch occupies residues 1 to 129; that stretch reads MSYGYPGQGY…GHQTRNQGSH (129 aa). Low complexity-rich tracts occupy residues 38 to 47, 59 to 80, 88 to 101, and 109 to 120; these read YSNPGQGQYN, YHQQPPQQYQQGSYNQGQYPPQ, GQQQQHHQQGHSQR, and GYDIYGYPIGSG. Residues His244 and Cys300 contribute to the active site.

This sequence belongs to the peptidase C14B family.

Functionally, involved in cell death (apoptosis). The sequence is that of Metacaspase-1A (casA) from Neurospora crassa (strain ATCC 24698 / 74-OR23-1A / CBS 708.71 / DSM 1257 / FGSC 987).